The primary structure comprises 957 residues: Protein translocase subunit SecA (957 aa).

ATP is bound by residues Q87, 105–109 (GEGKT), and D512. Positions 924–957 (AAPAQAPSKSKRSAGRNDPCPCGSGQKYKKCCGK) are disordered. Positions 943, 945, 954, and 955 each coordinate Zn(2+).

It belongs to the SecA family. As to quaternary structure, monomer and homodimer. Part of the essential Sec protein translocation apparatus which comprises SecA, SecYEG and auxiliary proteins SecDF-YajC and YidC. Zn(2+) serves as cofactor.

The protein localises to the cell inner membrane. Its subcellular location is the cytoplasm. The catalysed reaction is ATP + H2O + cellular proteinSide 1 = ADP + phosphate + cellular proteinSide 2.. In terms of biological role, part of the Sec protein translocase complex. Interacts with the SecYEG preprotein conducting channel. Has a central role in coupling the hydrolysis of ATP to the transfer of proteins into and across the cell membrane, serving as an ATP-driven molecular motor driving the stepwise translocation of polypeptide chains across the membrane. The protein is Protein translocase subunit SecA of Geobacter sp. (strain M21).